Reading from the N-terminus, the 388-residue chain is UDP-4-amino-4-deoxy-L-arabinose--oxoglutarate aminotransferase (388 aa).

Lysine 183 carries the post-translational modification N6-(pyridoxal phosphate)lysine.

Belongs to the DegT/DnrJ/EryC1 family. ArnB subfamily. Homodimer. Pyridoxal 5'-phosphate is required as a cofactor.

It carries out the reaction UDP-4-amino-4-deoxy-beta-L-arabinose + 2-oxoglutarate = UDP-beta-L-threo-pentopyranos-4-ulose + L-glutamate. Its pathway is nucleotide-sugar biosynthesis; UDP-4-deoxy-4-formamido-beta-L-arabinose biosynthesis; UDP-4-deoxy-4-formamido-beta-L-arabinose from UDP-alpha-D-glucuronate: step 2/3. It participates in bacterial outer membrane biogenesis; lipopolysaccharide biosynthesis. In terms of biological role, catalyzes the conversion of UDP-4-keto-arabinose (UDP-Ara4O) to UDP-4-amino-4-deoxy-L-arabinose (UDP-L-Ara4N). The modified arabinose is attached to lipid A and is required for resistance to polymyxin and cationic antimicrobial peptides. This Shewanella sediminis (strain HAW-EB3) protein is UDP-4-amino-4-deoxy-L-arabinose--oxoglutarate aminotransferase.